The sequence spans 354 residues: Ferrochelatase (354 aa).

Residues H204 and E306 each contribute to the Fe cation site.

This sequence belongs to the ferrochelatase family.

The protein localises to the cytoplasm. It carries out the reaction heme b + 2 H(+) = protoporphyrin IX + Fe(2+). The protein operates within porphyrin-containing compound metabolism; protoheme biosynthesis; protoheme from protoporphyrin-IX: step 1/1. Catalyzes the ferrous insertion into protoporphyrin IX. The polypeptide is Ferrochelatase (Coxiella burnetii (strain CbuG_Q212) (Coxiella burnetii (strain Q212))).